A 670-amino-acid chain; its full sequence is Major fimbrium tip subunit FimD (670 aa).

The first 24 residues, Met-1–Gly-24, serve as a signal peptide directing secretion. The N-palmitoyl cysteine moiety is linked to residue Cys-25. The S-diacylglycerol cysteine moiety is linked to residue Cys-25. Positions Cys-25–Arg-50 are excised as a propeptide.

Belongs to the FimD family. As to quaternary structure, fimbriae are composed of a major, structural subunit and the minor components FimC, FimD and FimE. Identified in a complex composed of FimC, FimD and FimE (in vitro). The complex interacts with host extracellular matrix proteins, including fibronectin and type I collagen. Interacts with host CXCR4.

The protein localises to the fimbrium. It is found in the cell outer membrane. Functionally, probably a component of the fimbrium tip. These long, filamentous pili are attached to the cell surface; they mediate biofilm formation, adhesion onto host cells and onto other bacteria that are part of the oral microbiome. They play an important role in invasion of periodontal tissues and are major virulence factors. FimC, FimD and FimE contribute to interaction with host CXCR4 and thereby down-regulate the TLR2-mediated host immune response. This chain is Major fimbrium tip subunit FimD, found in Porphyromonas gingivalis (strain ATCC 33277 / DSM 20709 / CIP 103683 / JCM 12257 / NCTC 11834 / 2561).